A 1001-amino-acid chain; its full sequence is E3 ubiquitin-protein ligase BRE1B (1001 aa).

A disordered region spans residues 1–31 (MSGLGNKRAAGDGGSGPPEKKLSREEKTTTT). The span at 18-28 (PEKKLSREEKT) shows a compositional bias: basic and acidic residues. Lys-20 is subject to N6-acetyllysine. A Phosphoserine modification is found at Ser-42. Residues 45-91 (EEIDLKVLQFKNKKLAERLEQRQACEDELRERIEKLEKRQATDDATL) adopt a coiled-coil conformation. The tract at residues 116–149 (GELSSAPEAPGTQEGPTCDGTPLPEPGTSELREP) is disordered. Coiled-coil stretches lie at residues 228–377 (ARTR…LRSL) and 437–523 (LQKK…AQTS). Residues Lys-355 and Lys-517 each carry the N6-acetyllysine modification. The segment at 516 to 646 (GKLRAQTSGS…EKAKVEEAKR (131 aa)) is disordered. A compositionally biased stretch (polar residues) spans 520 to 531 (AQTSGSTHSTPN). Ser-528 bears the Phosphoserine mark. Residues Lys-578 and Lys-579 each participate in a glycyl lysine isopeptide (Lys-Gly) (interchain with G-Cter in SUMO2) cross-link. Phosphoserine is present on Ser-585. Basic and acidic residues-rich tracts occupy residues 602–619 (RGREPEARPKRELREREG) and 633–646 (RADREKAKVEEAKR). Residues 627 to 946 (VASALSRADR…EEIKEYKARL (320 aa)) are a coiled coil. Residues 948–987 (CPCCNTRKKDAVLTKCFHVFCFECVRGRYEARQRKCPKCN) form an RING-type zinc finger.

The protein belongs to the BRE1 family. In terms of assembly, component of the RNF20/40 complex (also known as BRE1 complex) probably composed of 2 copies of RNF20/BRE1A and 2 copies of RNF40/BRE1B. Interacts with UBE2E1/UBCH6. Interacts with RB1 and WAC.

The protein localises to the nucleus. The enzyme catalyses S-ubiquitinyl-[E2 ubiquitin-conjugating enzyme]-L-cysteine + [acceptor protein]-L-lysine = [E2 ubiquitin-conjugating enzyme]-L-cysteine + N(6)-ubiquitinyl-[acceptor protein]-L-lysine.. It participates in protein modification; protein ubiquitination. Its function is as follows. Component of the RNF20/40 E3 ubiquitin-protein ligase complex that mediates monoubiquitination of 'Lys-120' of histone H2B (H2BK120ub1). H2BK120ub1 gives a specific tag for epigenetic transcriptional activation and is also prerequisite for histone H3 'Lys-4' and 'Lys-79' methylation (H3K4me and H3K79me, respectively). It thereby plays a central role in histone code and gene regulation. The RNF20/40 complex forms a H2B ubiquitin ligase complex in cooperation with the E2 enzyme UBE2A or UBE2B; reports about the cooperation with UBE2E1/UBCH are contradictory. Required for transcriptional activation of Hox genes. In Macaca fascicularis (Crab-eating macaque), this protein is E3 ubiquitin-protein ligase BRE1B (RNF40).